Here is a 251-residue protein sequence, read N- to C-terminus: DNA repair protein RecO (251 aa).

Belongs to the RecO family.

In terms of biological role, involved in DNA repair and RecF pathway recombination. This is DNA repair protein RecO from Streptococcus mutans serotype c (strain ATCC 700610 / UA159).